We begin with the raw amino-acid sequence, 369 residues long: Glutamate 5-kinase (369 aa).

K9 serves as a coordination point for ATP. Substrate-binding residues include S49, D136, and N148. ATP is bound by residues 168 to 169 and 210 to 216; these read TD and TGGMLTK. The PUA domain occupies 275–355; sequence QGSIWVDKGA…KGVLIYRDDW (81 aa).

It belongs to the glutamate 5-kinase family.

It localises to the cytoplasm. It carries out the reaction L-glutamate + ATP = L-glutamyl 5-phosphate + ADP. It participates in amino-acid biosynthesis; L-proline biosynthesis; L-glutamate 5-semialdehyde from L-glutamate: step 1/2. Catalyzes the transfer of a phosphate group to glutamate to form L-glutamate 5-phosphate. The protein is Glutamate 5-kinase of Streptococcus pneumoniae serotype 4 (strain ATCC BAA-334 / TIGR4).